Here is a 172-residue protein sequence, read N- to C-terminus: 3-hydroxydecanoyl-[acyl-carrier-protein] dehydratase (172 aa).

His71 is an active-site residue.

Belongs to the thioester dehydratase family. FabA subfamily. As to quaternary structure, homodimer.

It localises to the cytoplasm. It catalyses the reaction a (3R)-hydroxyacyl-[ACP] = a (2E)-enoyl-[ACP] + H2O. The catalysed reaction is (3R)-hydroxydecanoyl-[ACP] = (2E)-decenoyl-[ACP] + H2O. The enzyme catalyses (2E)-decenoyl-[ACP] = (3Z)-decenoyl-[ACP]. It functions in the pathway lipid metabolism; fatty acid biosynthesis. Necessary for the introduction of cis unsaturation into fatty acids. Catalyzes the dehydration of (3R)-3-hydroxydecanoyl-ACP to E-(2)-decenoyl-ACP and then its isomerization to Z-(3)-decenoyl-ACP. Can catalyze the dehydratase reaction for beta-hydroxyacyl-ACPs with saturated chain lengths up to 16:0, being most active on intermediate chain length. This Edwardsiella ictaluri (strain 93-146) protein is 3-hydroxydecanoyl-[acyl-carrier-protein] dehydratase.